Here is a 636-residue protein sequence, read N- to C-terminus: Ubiquitin-activating enzyme E1-like (636 aa).

Residues 28–33, Asp-52, 60–63, Lys-76, and 121–126 each bind ATP; these read GAGGIG, NLNR, and DNLAAR. Residues Cys-162 and Cys-165 each contribute to the Zn(2+) site. The Glycyl thioester intermediate role is filled by Cys-177. Zn(2+) is bound by residues Cys-435 and Cys-438. Residues 581–636 form a disordered region; sequence DGIVILDDDEGEITIDAEPINGSKKRPVDTEISEAPSNKRTKLVNEPTNSDIVELD. Residues 586-595 show a composition bias toward acidic residues; the sequence is LDDDEGEITI. The short motif at 619–622 is the Nuclear localization signal element; sequence KRTK. Residues 626–636 show a composition bias toward polar residues; that stretch reads EPTNSDIVELD.

The protein belongs to the ubiquitin-activating E1 family. Heterodimer of UBA2 and AOS1. The complex binds SMT3. In terms of processing, multiubiquitinated in vivo.

The protein localises to the nucleus. The protein operates within protein modification; protein sumoylation. The dimeric enzyme acts as a SMT3 E1 ligase. It mediates ATP-dependent activation of SMT3 and formation of a thioester with a conserved cysteine residue on AOS1. The chain is Ubiquitin-activating enzyme E1-like (UBA2) from Saccharomyces cerevisiae (strain ATCC 204508 / S288c) (Baker's yeast).